The sequence spans 446 residues: Ribosome biogenesis protein WDR12 homolog (446 aa).

The ubiquitin-like (UBL) domain stretch occupies residues 21–105 (VQITFFSKDK…ETILKIECII (85 aa)). 2 WD repeats span residues 171–211 (KCSG…LVEK) and 216–255 (GHERAVECVSVNSDATRAISGSVDTNLKVWNLDPSDEATI). The segment at 256 to 275 (YEKEEEESSAKKKRKKDTRT) is disordered. WD repeat units follow at residues 284–324 (GHRD…EVSR), 326–365 (KGPKSFTSIDIHPTSNLLISSCTDAIPRLYDPKNRDGAMV), 371–412 (GHQN…SSLF), and 416–446 (GHEDRILCAAWNEGLIATGSADCSIKIFETS).

It belongs to the WD repeat WDR12/YTM1 family.

The protein resides in the nucleus. The protein localises to the nucleolus. It is found in the nucleoplasm. In terms of biological role, required for maturation of ribosomal RNAs and formation of the large ribosomal subunit. The polypeptide is Ribosome biogenesis protein WDR12 homolog (Caenorhabditis briggsae).